Consider the following 600-residue polypeptide: Alpha-N-acetylgalactosaminide alpha-2,6-sialyltransferase 1 (600 aa).

The Cytoplasmic portion of the chain corresponds to 1–14 (MRSCLWRCRHLSQG). The chain crosses the membrane as a helical; Signal-anchor for type II membrane protein span at residues 15 to 35 (VQWSLLLAVLVFFLFALPSFI). Over 36-600 (KEPQTKPSRH…PGPGTAKAKN (565 aa)) the chain is Lumenal. Disordered regions lie at residues 38–191 (PQTK…AATT) and 208–248 (GAVS…TQRN). The segment covering 46–55 (QRTENIKERS) has biased composition (basic and acidic residues). 3 stretches are compositionally biased toward polar residues: residues 84–94 (NALNTQTQPKA), 151–179 (TEAQ…ASRT), and 209–219 (AVSTRTRQKGV). 2 disulfides stabilise this stretch: cysteine 279–cysteine 362 and cysteine 365–cysteine 533. Asparagine 300, asparagine 311, asparagine 331, asparagine 375, and asparagine 460 each carry an N-linked (GlcNAc...) asparagine glycan.

Belongs to the glycosyltransferase 29 family. Glycosylated; autosialylated. Expression is restricted to the gastrointestinal tract. Highly expressed in goblet cells. Also expressed in various tumor cells.

Its subcellular location is the golgi apparatus membrane. It catalyses the reaction a beta-D-galactosyl-(1-&gt;3)-N-acetyl-alpha-D-galactosaminyl derivative + CMP-N-acetyl-beta-neuraminate = a beta-D-galactosyl-(1-&gt;3)-[N-acetyl-alpha-neuraminyl-(2-&gt;6)]-N-acetyl-alpha-D-galactosaminyl derivative + CMP + H(+). It carries out the reaction a 3-O-[N-acetyl-alpha-D-galactosaminyl]-L-seryl-[protein] + CMP-N-acetyl-beta-neuraminate = a 3-O-[N-acetyl-alpha-neuraminosyl-(2-&gt;6)-N-acetyl-alpha-D-galactosaminyl]-L-seryl-[protein] + CMP + H(+). The enzyme catalyses a 3-O-[N-acetyl-alpha-D-galactosaminyl]-L-threonyl-[protein] + CMP-N-acetyl-beta-neuraminate = a 3-O-[N-acetyl-alpha-neuraminosyl-(2-&gt;6)-N-acetyl-alpha-D-galactosaminyl]-L-threonyl-[protein] + CMP + H(+). The catalysed reaction is a 3-O-[beta-D-galactosyl-(1-&gt;3)-N-acetyl-alpha-D-galactosaminyl]-L-seryl-[protein] + CMP-N-acetyl-beta-neuraminate = a 3-O-{beta-D-galactosyl-(1-&gt;3)-[N-acetyl-alpha-neuraminosyl-(2-&gt;6)]-N-acetyl-alpha-D-galactosaminyl}-L-seryl-[protein] + CMP + H(+). It catalyses the reaction a 3-O-[beta-D-galactosyl-(1-&gt;3)-N-acetyl-alpha-D-galactosaminyl]-L-threonyl-[protein] + CMP-N-acetyl-beta-neuraminate = a 3-O-{beta-D-galactosyl-(1-&gt;3)-[N-acetyl-alpha-neuraminosyl-(2-&gt;6)]-N-acetyl-alpha-D-galactosaminyl}-L-threonyl-[protein] + CMP + H(+). It carries out the reaction a 3-O-[N-acetyl-alpha-neuraminyl-(2-&gt;3)-beta-D-galactosyl-(1-&gt;3)-N-acetyl-alpha-D-galactosaminyl]-L-threonyl-[protein] + CMP-N-acetyl-beta-neuraminate = a 3-O-{alpha-Neu5Ac-(2-&gt;3)-beta-D-Gal-(1-&gt;3)-[alpha-Neu5Ac-(2-&gt;6)]-alpha-D-GalNAc}-L-threonyl-[protein] + CMP + H(+). Its pathway is protein modification; protein glycosylation. Functionally, protein sialyltransferase specifically expressed in goblet cells that plays a key role in intestinal host-commensal homeostasis. Conjugates sialic acid with an alpha-2-6 linkage to N-acetylgalactosamine (GalNAc) glycan chains linked to serine or threonine in glycoproteins. Catalyzes the formation of the sialyl-Tn (S-Tn) antigen, an antigen found in intestinal goblet cells, as well as ulcerative colitis (UC) and various cancers. Protein sialylation in globlet cells is essential for mucus integrity and is required to protect the intestinal mucus against excessive bacterial proteolytic degradation. The chain is Alpha-N-acetylgalactosaminide alpha-2,6-sialyltransferase 1 from Homo sapiens (Human).